A 415-amino-acid chain; its full sequence is Lipoyl synthase, apicoplast (415 aa).

A signal peptide spans 1–23; the sequence is MHFGIPSLFYLYILFSIIMRIKC. [4Fe-4S] cluster contacts are provided by cysteine 153, cysteine 158, cysteine 164, cysteine 179, cysteine 183, cysteine 186, and serine 394. The 219-residue stretch at 165–383 folds into the Radical SAM core domain; the sequence is WNIGTATIML…KEEGLKMGFK (219 aa).

The protein belongs to the radical SAM superfamily. Lipoyl synthase family. [4Fe-4S] cluster serves as cofactor.

Its subcellular location is the plastid. It localises to the apicoplast. The catalysed reaction is [[Fe-S] cluster scaffold protein carrying a second [4Fe-4S](2+) cluster] + N(6)-octanoyl-L-lysyl-[protein] + 2 oxidized [2Fe-2S]-[ferredoxin] + 2 S-adenosyl-L-methionine + 4 H(+) = [[Fe-S] cluster scaffold protein] + N(6)-[(R)-dihydrolipoyl]-L-lysyl-[protein] + 4 Fe(3+) + 2 hydrogen sulfide + 2 5'-deoxyadenosine + 2 L-methionine + 2 reduced [2Fe-2S]-[ferredoxin]. It participates in protein modification; protein lipoylation via endogenous pathway; protein N(6)-(lipoyl)lysine from octanoyl-[acyl-carrier-protein]: step 2/2. In terms of biological role, catalyzes the radical-mediated insertion of two sulfur atoms into the C-6 and C-8 positions of the octanoyl moiety bound to the lipoyl domains of lipoate-dependent enzymes, thereby converting the octanoylated domains into lipoylated derivatives. The protein is Lipoyl synthase, apicoplast of Plasmodium falciparum (isolate 3D7).